A 708-amino-acid polypeptide reads, in one-letter code: Exocyst complex component 5 (708 aa).

Ala2 carries the post-translational modification N-acetylalanine. Positions 40–101 (KRLLEEFVNH…AFQHFQELDE (62 aa)) form a coiled coil. Phosphothreonine is present on residues Thr122, Thr395, and Thr405. Ser412 is modified (phosphoserine).

It belongs to the SEC10 family. The exocyst complex is composed of EXOC1, EXOC2, EXOC3, EXOC4, EXOC5, EXOC6, EXOC7 and EXOC8. Interacts with EXOC3L1. In terms of tissue distribution, ubiquitous.

The protein localises to the cytoplasm. The protein resides in the midbody. Component of the exocyst complex involved in the docking of exocytic vesicles with fusion sites on the plasma membrane. In Rattus norvegicus (Rat), this protein is Exocyst complex component 5 (Exoc5).